Reading from the N-terminus, the 533-residue chain is T-complex protein 1 subunit delta (533 aa).

Positions 1 to 26 (MSAPAAAPAKVLPSRSDFDEKEKEKD) are disordered. Positions 16–26 (SDFDEKEKEKD) are enriched in basic and acidic residues.

It belongs to the TCP-1 chaperonin family. Heterooligomeric complex of about 850 to 900 kDa that forms two stacked rings, 12 to 16 nm in diameter.

The protein resides in the cytoplasm. Functionally, molecular chaperone; assists the folding of proteins upon ATP hydrolysis. Known to play a role, in vitro, in the folding of actin and tubulin. The protein is T-complex protein 1 subunit delta (cct4) of Dictyostelium discoideum (Social amoeba).